Consider the following 262-residue polypeptide: Hydroxyethylthiazole kinase (262 aa).

Met-50 contributes to the substrate binding site. The ATP site is built by Arg-125 and Thr-171. Gly-198 contributes to the substrate binding site.

It belongs to the Thz kinase family. The cofactor is Mg(2+).

It catalyses the reaction 5-(2-hydroxyethyl)-4-methylthiazole + ATP = 4-methyl-5-(2-phosphooxyethyl)-thiazole + ADP + H(+). The protein operates within cofactor biosynthesis; thiamine diphosphate biosynthesis; 4-methyl-5-(2-phosphoethyl)-thiazole from 5-(2-hydroxyethyl)-4-methylthiazole: step 1/1. In terms of biological role, catalyzes the phosphorylation of the hydroxyl group of 4-methyl-5-beta-hydroxyethylthiazole (THZ). The polypeptide is Hydroxyethylthiazole kinase (Escherichia coli O6:H1 (strain CFT073 / ATCC 700928 / UPEC)).